A 289-amino-acid chain; its full sequence is Cuticle collagen 19 (289 aa).

Residues 1 to 18 (MGKLIVVGSCGVLVCVLA) form the signal peptide. The segment at 95 to 289 (SEGCPAGPPG…PCPSRAAYKA (195 aa)) is disordered. Triple-helical region regions lie at residues 101-130 (GPPG…PGVI) and 147-269 (GRPG…KGED). The segment covering 162–183 (GPAGGNGRRGPPGPVGGPGEQG) has biased composition (gly residues). 2 stretches are compositionally biased toward low complexity: residues 184 to 207 (PQGD…GEPG) and 223 to 239 (PRGE…PGND).

Belongs to the cuticular collagen family. In terms of assembly, collagen polypeptide chains are complexed within the cuticle by disulfide bonds and other types of covalent cross-links.

Its function is as follows. Nematode cuticles are composed largely of collagen-like proteins. The cuticle functions both as an exoskeleton and as a barrier to protect the worm from its environment. The polypeptide is Cuticle collagen 19 (col-19) (Caenorhabditis elegans).